The following is a 328-amino-acid chain: Twinfilin (328 aa).

Residues 1–137 (MSASVELKPT…DYQQIMKSLS (137 aa)) form the ADF-H 1 domain. Ser143 is modified (phosphoserine). Residues 173–304 (GVAMSIDDKA…TEKEILHAAG (132 aa)) enclose the ADF-H 2 domain. The interval 302–328 (AAGISSPQAETSTTKTGFSRPRPPRRR) is disordered. Residues 306–318 (SSPQAETSTTKTG) are compositionally biased toward polar residues.

Belongs to the actin-binding proteins ADF family. Twinfilin subfamily. In terms of assembly, interacts with G-actin; ADP-actin form.

It localises to the cytoplasm. It is found in the cytoskeleton. Functionally, actin-binding protein involved in motile and morphological processes. Inhibits actin polymerization, likely by sequestering G-actin. Prevents actin filament assembly by forming a 1:1 complex with actin monomers, and inhibits the nucleotide exchange reaction of actin monomers. In Schizosaccharomyces pombe (strain 972 / ATCC 24843) (Fission yeast), this protein is Twinfilin (twf1).